The primary structure comprises 612 residues: E3 ubiquitin-protein ligase synoviolin (612 aa).

Residues 1 to 4 (MFRT) are Cytoplasmic-facing. The segment at 1–251 (MFRTAVMMAA…LFAIRPMYLA (251 aa)) is involved in FAM8A1 interaction. A helical transmembrane segment spans residues 5-25 (AVMMAASLALTGAVVAHAYYL). The interaction with SEL1L stretch occupies residues 21 to 42 (HAYYLKHQFYPTVVYLTKSSPS). Residues 26–41 (KHQFYPTVVYLTKSSP) are Lumenal-facing. A helical membrane pass occupies residues 42 to 62 (SMAVLYIQAFVLVFLLGKVMG). Residues 63–98 (KVFFGQLRAAEMEHLLERSWYAVTETCLAFTVFRDD) are Cytoplasmic-facing. Residues 99–119 (FSPRFVALFTLLLFLKCFHWL) traverse the membrane as a helical segment. Topologically, residues 120–140 (AEDRVDFMERSPNISWLFHCR) are lumenal. Residues 141 to 161 (IVSLMFLLGILDFLFVSHAYH) traverse the membrane as a helical segment. Residues 162 to 169 (SILTRGAS) lie on the Cytoplasmic side of the membrane. Residues 170–190 (VQLVFGFEYAILMTMVLTIFI) form a helical membrane-spanning segment. Residues 191 to 224 (KYVLHSVDLQSENPWDNKAVYMLYTELFTGFIKV) are Lumenal-facing. Residues 225-245 (LLYMAFMTIMIKVHTFPLFAI) form a helical membrane-spanning segment. Positions 236 to 270 (KVHTFPLFAIRPMYLAMRQFKKAVTDAIMSRRAIR) are interaction with p53/TP53. Topologically, residues 246 to 612 (RPMYLAMRQF…LQKLESPVAH (367 aa)) are cytoplasmic. Residues C291, C294, C307, H309, H312, C315, C326, and C329 each coordinate Zn(2+). The segment at 291–330 (CIICREEMVTGAKRLPCNHIFHTSCLRSWFQRQQTCPTCR) adopts an RING-type; atypical zinc-finger fold. 2 disordered regions span residues 337-375 (SLPAQSPPPPEPADQGPPPAPHPQPLLPQPPNFPQGLLP) and 393-449 (PVPP…PGFP). 2 stretches are compositionally biased toward pro residues: residues 341 to 375 (QSPPPPEPADQGPPPAPHPQPLLPQPPNFPQGLLP) and 393 to 409 (PVPPPPSSGEAAAPPPT). Residues 416-434 (PSGAATTTAAGTSTSAPAP) show a composition bias toward low complexity. A compositionally biased stretch (pro residues) spans 435–449 (GSVPGPEAGPAPGFP). The interval 474-529 (GFAGLTPEELRALEGHERQHLEARLQSLRNIHTLLDAAMLQINQYLTVLASLGPPR) is HAF-H domain; necessary to form higher-order Hrd1 complexes. The interval 530–612 (PATSVNPTEE…LQKLESPVAH (83 aa)) is disordered. A compositionally biased stretch (low complexity) spans 539-559 (ETASTVVSAAPSTSAPSSEAP). Over residues 560-570 (TPSPGASPPIP) the composition is skewed to pro residues. The span at 586-595 (ELPEDGEPDA) shows a compositional bias: acidic residues. A Phosphoserine modification is found at S608.

The protein belongs to the HRD1 family. In terms of assembly, homodimer. Interacts with p53/TP53. Interacts with HTT. Component of the HRD1 complex, which comprises at least SYNV1/HRD1, DERL1/2, FAM8A1, HERPUD1/HERP, OS9, SEL1L and UBE2J1. FAM8A1 is stabilized by interaction with SYNV1, which prevents its proteasomal degradation. OS9 and UBE2J1 recruitment to the complex may be mediated by SEL1L. SYNV1 assembles with SEL1L and FAM8A1 through its transmembrane domains, but interaction with its cytoplasmic domain is required to confer stability to FAM8A1 and enhance recruitment of HERPUD1. The HRD1 complex also associates with VIMP and may transfer misfolded proteins from the endoplasmic reticulum to VCP. May form a complex with ERLEC1; HSPA5; OS9 and SEL1L. Interacts with VCP. Interacts with UBXN6. Interacts with BAG6. Interacts with NFE2L1. Interacts (via N-terminus) with components of the pre-B cell receptor, including IGLL1 and VPREB1A. Interacts with CREB3L3; this interaction leads to CREB3L3 ubiquitination and proteasomal degradation. Post-translationally, auto-ubiquitinated. Deubiquitinated by USP19. Widely expressed, with highest levels in bone, spleen, lung and testis. In the brain, present in neurons but not in glial cells. Up-regulated in synovial tissues from mice with collagen-induced arthritis (at protein level). Expressed in the liver.

The protein localises to the endoplasmic reticulum membrane. It catalyses the reaction S-ubiquitinyl-[E2 ubiquitin-conjugating enzyme]-L-cysteine + [acceptor protein]-L-lysine = [E2 ubiquitin-conjugating enzyme]-L-cysteine + N(6)-ubiquitinyl-[acceptor protein]-L-lysine.. It participates in protein modification; protein ubiquitination. Its function is as follows. E3 ubiquitin-protein ligase which accepts ubiquitin specifically from endoplasmic reticulum-associated UBC7 E2 ligase and transfers it to substrates, promoting their degradation. Component of the endoplasmic reticulum quality control (ERQC) system also called ER-associated degradation (ERAD) involved in ubiquitin-dependent degradation of misfolded endoplasmic reticulum proteins. Also promotes the degradation of normal but naturally short-lived proteins such as SGK. Protects cells from ER stress-induced apoptosis. Sequesters p53/TP53 in the cytoplasm and promotes its degradation, thereby negatively regulating its biological function in transcription, cell cycle regulation and apoptosis. Required for embryogenesis. Mediates the ubiquitination and subsequent degradation of cytoplasmic NFE2L1. During the early stage of B cell development, required for degradation of the pre-B cell receptor (pre-BCR) complex, hence supporting further differentiation into mature B cells. This chain is E3 ubiquitin-protein ligase synoviolin (Syvn1), found in Mus musculus (Mouse).